A 532-amino-acid polypeptide reads, in one-letter code: [Pyruvate dehydrogenase [acetyl-transferring]]-phosphatase 2, mitochondrial (532 aa).

The N-terminal 69 residues, 1-69 (MSSTVSYWIF…FALRKAYRHT (69 aa)), are a transit peptide targeting the mitochondrion. The region spanning 107–518 (NSVLRFESNQ…YRDDITVMVV (412 aa)) is the PPM-type phosphatase domain. 4 residues coordinate Mn(2+): aspartate 144, glycine 145, aspartate 415, and aspartate 511.

Belongs to the PP2C family. Requires Mg(2+) as cofactor.

The protein localises to the mitochondrion. It carries out the reaction O-phospho-L-seryl-[pyruvate dehydrogenase E1 alpha subunit] + H2O = L-seryl-[pyruvate dehydrogenase E1 alpha subunit] + phosphate. In terms of biological role, mitochondrial enzyme that catalyzes the dephosphorylation and concomitant reactivation of the alpha subunit of the E1 component of the pyruvate dehydrogenase complex (PDC), thereby stimulating the conversion of pyruvate into acetyl-CoA. Acts as a crucial regulator of T cell metabolism and function, with a particular focus on T-helper Th17. This chain is [Pyruvate dehydrogenase [acetyl-transferring]]-phosphatase 2, mitochondrial (Pdp2), found in Mus musculus (Mouse).